Reading from the N-terminus, the 116-residue chain is Thioredoxin (116 aa).

Residues 2-113 (TDSEKSATIK…LLRELSDVVP (112 aa)) enclose the Thioredoxin domain. An intrachain disulfide couples cysteine 37 to cysteine 40.

Belongs to the thioredoxin family.

Participates in various redox reactions through the reversible oxidation of its active center dithiol to a disulfide and catalyzes dithiol-disulfide exchange reactions. The sequence is that of Thioredoxin (trxA) from Mycobacterium bovis (strain ATCC BAA-935 / AF2122/97).